A 363-amino-acid chain; its full sequence is Mitochondrial RNA-splicing protein MRS1 (363 aa).

In terms of assembly, homodimer. Forms a ribonucleoprotein complex composed of maturase bI3 and 2 dimers of MRS1 that assemble around the bI3 RNA.

Its subcellular location is the mitochondrion matrix. Its function is as follows. Function in mitochondrial RNA splicing in the excision of mitochondrial group I introns aI5 beta from COX1 and bI3 from COB transcripts and thus would be involved in obtaining the correct structure of the intron, to allow the RNA catalyzed reactions to occur. The polypeptide is Mitochondrial RNA-splicing protein MRS1 (MRS1) (Saccharomyces cerevisiae (strain ATCC 204508 / S288c) (Baker's yeast)).